A 396-amino-acid chain; its full sequence is Elongation factor Tu 1 (396 aa).

One can recognise a tr-type G domain in the interval 10–206 (KPHINVGTIG…AMDAHIPQPE (197 aa)). Positions 19–26 (GHVDHGKT) are G1. Residue 19 to 26 (GHVDHGKT) participates in GTP binding. T26 is a Mg(2+) binding site. A G2 region spans residues 60–64 (GITIA). Residues 81–84 (DCPG) form a G3 region. Residues 81-85 (DCPGH) and 136-139 (NKAD) contribute to the GTP site. Positions 136–139 (NKAD) are G4. The interval 174–176 (SAL) is G5.

Belongs to the TRAFAC class translation factor GTPase superfamily. Classic translation factor GTPase family. EF-Tu/EF-1A subfamily. As to quaternary structure, monomer.

It is found in the cytoplasm. The catalysed reaction is GTP + H2O = GDP + phosphate + H(+). GTP hydrolase that promotes the GTP-dependent binding of aminoacyl-tRNA to the A-site of ribosomes during protein biosynthesis. In Halorhodospira halophila (strain DSM 244 / SL1) (Ectothiorhodospira halophila (strain DSM 244 / SL1)), this protein is Elongation factor Tu 1.